The following is a 244-amino-acid chain: tRNA pseudouridine synthase A (244 aa).

Residue Asp-52 is the Nucleophile of the active site. Position 110 (Tyr-110) interacts with substrate.

The protein belongs to the tRNA pseudouridine synthase TruA family. As to quaternary structure, homodimer.

It carries out the reaction uridine(38/39/40) in tRNA = pseudouridine(38/39/40) in tRNA. Formation of pseudouridine at positions 38, 39 and 40 in the anticodon stem and loop of transfer RNAs. The protein is tRNA pseudouridine synthase A of Clostridium botulinum (strain Alaska E43 / Type E3).